The sequence spans 335 residues: Tumor necrosis factor receptor superfamily member 6 (335 aa).

The N-terminal stretch at 1-25 is a signal peptide; that stretch reads MLGIWTLLPLVLTSVARLSSKSVNA. At 26–173 the chain is on the extracellular side; the sequence is QVTDINSKGL…KCKEEGSRSN (148 aa). Residue Thr-28 is glycosylated (O-linked (GalNAc...) threonine). TNFR-Cys repeat units lie at residues 47–83, 84–127, and 128–166; these read QNLE…PDCV, PCQE…NTKC, and RCKP…TKCK. 8 disulfides stabilise this stretch: Cys-59–Cys-73, Cys-63–Cys-82, Cys-85–Cys-101, Cys-104–Cys-119, Cys-107–Cys-127, Cys-129–Cys-143, Cys-146–Cys-157, and Cys-149–Cys-165. N-linked (GlcNAc...) asparagine glycans are attached at residues Asn-118 and Asn-136. A helical transmembrane segment spans residues 174–190; it reads LGWLCLLLLPIPLIVWV. The Cytoplasmic portion of the chain corresponds to 191–335; sequence KRKEVQKTCR…NFRNEIQSLV (145 aa). Residue Cys-199 is the site of S-palmitoyl cysteine attachment. Ser-209 is subject to Phosphoserine. The interaction with HIPK3 stretch occupies residues 212–317; the sequence is SPTLNPETVA…EKIQTIILKD (106 aa). At Thr-214 the chain carries Phosphothreonine. Ser-225 bears the Phosphoserine mark. The tract at residues 230–254 is interaction with CALM; the sequence is SKYITTIAGVMTLSQVKGFVRKNGV. In terms of domain architecture, Death spans 230-314; the sequence is SKYITTIAGV…TLAEKIQTII (85 aa). Residue Arg-250 is glycosylated ((Microbial infection) N-beta-linked (GlcNAc) arginine).

In terms of assembly, component of the death-induced signaling complex (DISC) composed of cell surface receptor FAS/CD95, adapter protein FADD and the CASP8 protease; recruitment of CASP8 to the complex is required for processing of CASP8 into the p18 and p10 subunits. Interacts directly (via DED domain) with NOL3 (via CARD domain); inhibits death-inducing signaling complex (DISC) assembly by inhibiting the increase in FAS-FADD binding induced by FAS activation. Binds DAXX. Interacts with HIPK3. Part of a complex containing HIPK3 and FADD. Binds RIPK1 and FAIM2. Interacts with BABAM2 and FEM1B. Interacts with CALM. In the absence of stimulation, interacts with BIRC2, DDX3X and GSK3B. The interaction with BIRC2 and DDX3X is further enhanced upon receptor stimulation and accompanied by DDX3X and BIRC2 cleavage. In terms of processing, (Microbial infection) Glycosylated at Arg-250 by enteropathogenic E.coli protein NleB1: arginine GlcNAcylation prevents homotypic/heterotypic death domain interactions. Post-translationally, palmitoylated. Palmitoylation by ZDHHC7 prevents the lysosomal degradation of FAS regulating its expression at the plasma membrane. N- and O-glycosylated. O-glycosylated with core 1 or possibly core 8 glycans. Isoform 1 and isoform 6 are expressed at equal levels in resting peripheral blood mononuclear cells. After activation there is an increase in isoform 1 and decrease in the levels of isoform 6.

It localises to the cell membrane. It is found in the membrane raft. Its subcellular location is the secreted. Its function is as follows. Receptor for TNFSF6/FASLG. The adapter molecule FADD recruits caspase CASP8 to the activated receptor. The resulting death-inducing signaling complex (DISC) performs CASP8 proteolytic activation which initiates the subsequent cascade of caspases (aspartate-specific cysteine proteases) mediating apoptosis. FAS-mediated apoptosis may have a role in the induction of peripheral tolerance, in the antigen-stimulated suicide of mature T-cells, or both. The secreted isoforms 2 to 6 block apoptosis (in vitro). The chain is Tumor necrosis factor receptor superfamily member 6 (FAS) from Homo sapiens (Human).